A 345-amino-acid chain; its full sequence is sn-glycerol-3-phosphate import ATP-binding protein UgpC (345 aa).

The 232-residue stretch at Ile4–Ile235 folds into the ABC transporter domain. Gly37 to Ser44 is an ATP binding site.

The protein belongs to the ABC transporter superfamily. sn-glycerol-3-phosphate importer (TC 3.A.1.1.3) family. The complex is composed of two ATP-binding proteins (UgpC), two transmembrane proteins (UgpA and UgpE) and a solute-binding protein (UgpB).

It is found in the cell inner membrane. It catalyses the reaction sn-glycerol 3-phosphate(out) + ATP + H2O = sn-glycerol 3-phosphate(in) + ADP + phosphate + H(+). In terms of biological role, part of the ABC transporter complex UgpBAEC involved in sn-glycerol-3-phosphate (G3P) import. Responsible for energy coupling to the transport system. The protein is sn-glycerol-3-phosphate import ATP-binding protein UgpC of Bartonella bacilliformis (strain ATCC 35685 / KC583 / Herrer 020/F12,63).